A 303-amino-acid polypeptide reads, in one-letter code: Bidirectional sugar transporter SWEET14 (303 aa).

Over 1 to 9 (MAGMSLQHP) the chain is Extracellular. The chain crosses the membrane as a helical span at residues 10–30 (WAFAFGLLGNIISFMTYLAPL). The 86-residue stretch at 13–98 (AFGLLGNIIS…AVYLVYAPKK (86 aa)) folds into the MtN3/slv 1 domain. Residues 31-44 (PTFYRIYKSKSTQG) are Cytoplasmic-facing. The chain crosses the membrane as a helical span at residues 45–65 (FQSVPYVVALFSAMLWIYYAL). Over 66 to 72 (LKSDECL) the chain is Extracellular. A helical transmembrane segment spans residues 73–93 (LITINSAGCVIETIYIAVYLV). The Cytoplasmic segment spans residues 94–105 (YAPKKAKMFTAK). Residues 106–126 (LLLLVNVGVFGLILLLTLLLS) form a helical membrane-spanning segment. Topologically, residues 127–133 (AGDRRIV) are extracellular. The helical transmembrane segment at 134–154 (VLGWVCVGFSVSVFVAPLSII) threads the bilayer. A MtN3/slv 2 domain is found at 134-217 (VLGWVCVGFS…MGLYAMYRNS (84 aa)). Residues 155-167 (RLVVRTKSVEFMP) are Cytoplasmic-facing. The chain crosses the membrane as a helical span at residues 168–188 (FSLSFSLTISAVVWFLYGLLI). The Extracellular portion of the chain corresponds to 189 to 192 (KDKY). The chain crosses the membrane as a helical span at residues 193 to 213 (VALPNVLGFSFGVIQMGLYAM). Residues 214–303 (YRNSTPKAVL…AGAGEKKVAA (90 aa)) are Cytoplasmic-facing. The disordered stretch occupies residues 266–290 (HPVDVESPPAEAPPEEDDKAAAATA).

Belongs to the SWEET sugar transporter family. In terms of assembly, forms homooligomers and/or heterooligomers.

It is found in the cell membrane. Mediates both low-affinity uptake and efflux of sugar across the plasma membrane. Its function is as follows. Confers blight susceptibility. Confers TAL effector-mediated susceptibility to Xanthomonas oryzae pv. oryzae. The polypeptide is Bidirectional sugar transporter SWEET14 (SWEET14) (Oryza sativa subsp. japonica (Rice)).